The following is a 368-amino-acid chain: E3 ubiquitin-protein ligase E3D (368 aa).

Ala2 carries the post-translational modification N-acetylalanine. The BRAT1-like motif motif lies at 129–159 (PLPSENWSALVGEWCCHPDPFANRPLHPREN). Residue Cys144 participates in Zn(2+) binding. Residues 214 to 236 (RPSEGSFPNIPRSQFLQSIIAQC) form an interaction with UBE2C region. An HECT-like region spans residues 332-368 (LPSATCLELLLILSRNNASLPLSLRQMNSFQVAFLKM).

As to quaternary structure, interacts with UBE2C/UbcH10 (E2 ubiquitin-conjugating enzyme). In vitro, interacts with cyclin-B. In terms of processing, ubiquitinated by UBCH10 (E2 ubiquitin-conjugating enzyme).

It is found in the cytoplasm. It carries out the reaction S-ubiquitinyl-[E2 ubiquitin-conjugating enzyme]-L-cysteine + [acceptor protein]-L-lysine = [E2 ubiquitin-conjugating enzyme]-L-cysteine + N(6)-ubiquitinyl-[acceptor protein]-L-lysine.. Its pathway is protein modification; protein ubiquitination. Its function is as follows. E3 ubiquitin-protein ligase which accepts ubiquitin from specific E2 ubiquitin-conjugating enzymes, and transfers it to substrates, generally promoting their degradation by the proteasome. Independently of its E3 ubiquitin-protein ligase activity, acts as an inhibitor of CPSF3 endonuclease activity by blocking CPSF3 active site. In Mus musculus (Mouse), this protein is E3 ubiquitin-protein ligase E3D (Ube3d).